A 163-amino-acid polypeptide reads, in one-letter code: Nucleotide-binding protein BLi01194 (163 aa).

It belongs to the YajQ family.

Its function is as follows. Nucleotide-binding protein. This is Nucleotide-binding protein BLi01194 from Bacillus licheniformis (strain ATCC 14580 / DSM 13 / JCM 2505 / CCUG 7422 / NBRC 12200 / NCIMB 9375 / NCTC 10341 / NRRL NRS-1264 / Gibson 46).